Consider the following 76-residue polypeptide: Small ribosomal subunit protein bS18 (76 aa).

The protein belongs to the bacterial ribosomal protein bS18 family. In terms of assembly, part of the 30S ribosomal subunit. Forms a tight heterodimer with protein bS6.

In terms of biological role, binds as a heterodimer with protein bS6 to the central domain of the 16S rRNA, where it helps stabilize the platform of the 30S subunit. In Marinobacter nauticus (strain ATCC 700491 / DSM 11845 / VT8) (Marinobacter aquaeolei), this protein is Small ribosomal subunit protein bS18.